The chain runs to 736 residues: Probable beta-glucosidase L (736 aa).

The N-terminal stretch at 1-21 (MNYRVPSLKATALAMAALTQA) is a signal peptide. Residue Asn-224 is glycosylated (N-linked (GlcNAc...) asparagine). Residue Asp-252 is part of the active site. Residues Asn-295, Asn-363, Asn-429, and Asn-607 are each glycosylated (N-linked (GlcNAc...) asparagine).

Belongs to the glycosyl hydrolase 3 family.

The protein resides in the secreted. The catalysed reaction is Hydrolysis of terminal, non-reducing beta-D-glucosyl residues with release of beta-D-glucose.. Its pathway is glycan metabolism; cellulose degradation. In terms of biological role, beta-glucosidases are one of a number of cellulolytic enzymes involved in the degradation of cellulosic biomass. Catalyzes the last step releasing glucose from the inhibitory cellobiose. This chain is Probable beta-glucosidase L (bglL), found in Aspergillus terreus (strain NIH 2624 / FGSC A1156).